The chain runs to 107 residues: Iron-sulfur cluster assembly protein CyaY (107 aa).

The protein belongs to the frataxin family.

Its function is as follows. Involved in iron-sulfur (Fe-S) cluster assembly. May act as a regulator of Fe-S biogenesis. The chain is Iron-sulfur cluster assembly protein CyaY from Edwardsiella ictaluri (strain 93-146).